Consider the following 315-residue polypeptide: High mobility group protein hmg-12 (315 aa).

The tract at residues 57 to 315 is disordered; it reads VKNETDSEAV…AIDAFFDGSD (259 aa). A compositionally biased stretch (polar residues) spans 77-86; sequence ANDSPANTND. Positions 118–128 form a DNA-binding region, a.T hook 1; sequence PVKKGRGRPIK. 2 stretches are compositionally biased toward low complexity: residues 147 to 160 and 196 to 205; these read AQTP…IDTA and AADTDAIDTA.

This sequence belongs to the HMGA family.

Its subcellular location is the nucleus. Transcriptional regulator. Binds to specific sequence motifs in regulatory elements. May recruit transcription factors, or may induce structural changes in chromatin, to thereby modulate embryonic expression of ATP-dependent chaperone cdc-48.1. The sequence is that of High mobility group protein hmg-12 from Caenorhabditis elegans.